Consider the following 451-residue polypeptide: Gamma-aminobutyric acid receptor subunit alpha-2 (451 aa).

The signal sequence occupies residues 1–28; the sequence is MKTKLSTCNVWSLLLVLLVWDPVRLVLA. The Extracellular portion of the chain corresponds to 29 to 249; the sequence is NIQEDEAKNN…MTAHFHLKRK (221 aa). Residue Asn38 is glycosylated (N-linked (GlcNAc...) asparagine). Arg94 contributes to the 4-aminobutanoate binding site. N-linked (GlcNAc...) asparagine glycosylation is present at Asn138. Thr157 is a 4-aminobutanoate binding site. Cys166 and Cys180 form a disulfide bridge. A helical transmembrane segment spans residues 250–270; sequence IGYFVIQTYLPCIMTVILSQV. The Cytoplasmic portion of the chain corresponds to 271–280; the sequence is SFWLNRESVP. Residues 281-300 form a helical membrane-spanning segment; it reads ARTVFGVTTVLTMTTLSISA. Residues 301-311 are Extracellular-facing; it reads RNSLPKVAYAT. A helical membrane pass occupies residues 312 to 332; sequence AMDWFIAVCYAFVFSALIEFA. Topologically, residues 333–420 are cytoplasmic; sequence TVNYFTKRGW…FNSVSKIDRM (88 aa). The disordered stretch occupies residues 389–408; that stretch reads KSATTPEPNKKPENKPAEAK. Positions 396–408 are enriched in basic and acidic residues; it reads PNKKPENKPAEAK. A helical transmembrane segment spans residues 421–441; sequence SRIVFPVLFGTFNLVYWATYL. The Extracellular portion of the chain corresponds to 442 to 451; that stretch reads NREPVLGVSP.

It belongs to the ligand-gated ion channel (TC 1.A.9) family. Gamma-aminobutyric acid receptor (TC 1.A.9.5) subfamily. GABRA2 sub-subfamily. Heteropentamer, formed by a combination of alpha (GABRA1-6), beta (GABRB1-3), gamma (GABRG1-3), delta (GABRD), epsilon (GABRE), rho (GABRR1-3), pi (GABRP) and theta (GABRQ) subunits, each subunit exhibiting distinct physiological and pharmacological properties. Interacts with UBQLN1. Interacts with KIF21B. Interacts with LHFPL4. Interacts with SHISA7; interaction leads to the regulation of GABA(A) receptor trafficking, channel deactivation kinetics and pharmacology. Post-translationally, glycosylated.

Its subcellular location is the postsynaptic cell membrane. It localises to the cell membrane. The protein localises to the cytoplasmic vesicle membrane. The protein resides in the cell projection. It is found in the dendrite. The enzyme catalyses chloride(in) = chloride(out). Its activity is regulated as follows. Activated by pentobarbital. Inhibited by the antagonist bicuculline. Functionally, alpha subunit of the heteropentameric ligand-gated chloride channel gated by gamma-aminobutyric acid (GABA), a major inhibitory neurotransmitter in the brain. GABA-gated chloride channels, also named GABA(A) receptors (GABAAR), consist of five subunits arranged around a central pore and contain GABA active binding site(s) located at the alpha and beta subunit interface(s). When activated by GABA, GABAARs selectively allow the flow of chloride anions across the cell membrane down their electrochemical gradient. Chloride influx into the postsynaptic neuron following GABAAR opening decreases the neuron ability to generate a new action potential, thereby reducing nerve transmission. The alpha-2 subunit exhibits synaptogenic activity together with beta-2 and very little to no activity together with beta-3, the gamma-2 subunit being necessary but not sufficient to induce rapid synaptic contacts formation. The sequence is that of Gamma-aminobutyric acid receptor subunit alpha-2 from Mus musculus (Mouse).